The chain runs to 204 residues: Large ribosomal subunit protein uL4 (204 aa).

Positions 44 to 76 (RAGTHRTKGMGEISGTTKKPYRQKGTGSARQGS) are disordered.

It belongs to the universal ribosomal protein uL4 family. Part of the 50S ribosomal subunit.

Its function is as follows. One of the primary rRNA binding proteins, this protein initially binds near the 5'-end of the 23S rRNA. It is important during the early stages of 50S assembly. It makes multiple contacts with different domains of the 23S rRNA in the assembled 50S subunit and ribosome. Functionally, forms part of the polypeptide exit tunnel. This is Large ribosomal subunit protein uL4 from Gluconobacter oxydans (strain 621H) (Gluconobacter suboxydans).